Consider the following 151-residue polypeptide: MTGFDADDAAALIQSYVDDHGLLSFLGVSVEDASDGEMRLRIPYHEKLTNHGPGEGDVHGGIAATLIDTAGGLAVRSALPKPVAANVATIDLNVSYLRPARGDLIADASVVRVGSTVGVAEISVVTPADTADAEPTEVAVGRGSFRVFRDD.

This sequence belongs to the thioesterase PaaI family.

The polypeptide is Putative esterase VNG_1336C (Halobacterium salinarum (strain ATCC 700922 / JCM 11081 / NRC-1) (Halobacterium halobium)).